The following is a 168-amino-acid chain: MKSLNRQTVSRFKKLSVPAAIMMILSTIISGIGTFLHYKEELMPSACANGWIQYDKHCYLDTNIKMSTDNTVYQCRKLRARLPRPDTRHLRVLFSIFYKDYWVSLKKTNNKWLDINNDKDIDISKLTNFKQLNSTTDAEACYIYKSGKLVKTVCKSTQSVLCVKRFYK.

Topologically, residues 1–14 (MKSLNRQTVSRFKK) are intravirion. A helical transmembrane segment spans residues 15 to 37 (LSVPAAIMMILSTIISGIGTFLH). Residues 38–168 (YKEELMPSAC…SVLCVKRFYK (131 aa)) lie on the Virion surface side of the membrane. Residues 54–163 (YDKHCYLDTN…CKSTQSVLCV (110 aa)) enclose the C-type lectin domain. Intrachain disulfides connect cysteine 75/cysteine 162 and cysteine 141/cysteine 154. A glycan (N-linked (GlcNAc...) asparagine; by host) is linked at asparagine 133.

It belongs to the orthopoxvirus OPG162 protein family. As to quaternary structure, interacts with protein OPG161. Interacts with protein OPG164. Interacts with protein OPG190.

The protein localises to the virion membrane. It localises to the host Golgi apparatus. Its function is as follows. Forms a complex with OPG162 and OPG190 to coordinate the incorporation of OPG164 into wrapped enveloped virion (EV) membranes and, subsequently, the production of actin tails. Therefore plays an essential role in efficient cell-to-cell spread of viral particles. This chain is Protein OPG162 (OPG162), found in Variola virus (isolate Human/India/Ind3/1967) (VARV).